The following is a 565-amino-acid chain: DNA repair protein RAD7 (565 aa).

2 disordered regions span residues 1-22 and 41-68; these read MYRS…PNSA and WYQR…FTAE. Residues 1 to 200 are hydrophilic; that stretch reads MYRSRNRPKR…SKLVFNKLRD (200 aa). The span at 47–62 shows a compositional bias: basic and acidic residues; sequence KKQEDATDEKKGKAED. A phosphoserine mark is found at serine 64 and serine 85. Residues 105–137 are disordered; that stretch reads ADSDEEEYETSHISDTPVSLSSANDRESLTKKR. Positions 115 to 127 are enriched in polar residues; sequence SHISDTPVSLSSA.

It to S.pombe SpCC613.14. As to quaternary structure, component of the global genome repair (GGR) complex composed of at least ABF1, RAD7 and RAD16. Interacts with ELC1.

Component of the global genome repair (GGR) complex which promotes global genome nucleotide excision repair (GG-NER) which removes DNA damage from nontranscribing DNA. This protein is one of 10 proteins (RAD1, 2,3,4,7,10,14, 16,23 and MMS19) involved in excision repair of DNA damaged with UV light, bulky adducts, or cross-linking agents. The protein is DNA repair protein RAD7 (RAD7) of Saccharomyces cerevisiae (strain ATCC 204508 / S288c) (Baker's yeast).